The following is a 523-amino-acid chain: 2-isopropylmalate synthase (523 aa).

The Pyruvate carboxyltransferase domain maps to 5 to 267 (VIIFDTTLRD…HTNINHHEIW (263 aa)). Positions 14, 202, 204, and 238 each coordinate Mn(2+). The regulatory domain stretch occupies residues 392 to 523 (RLDYFSVQSG…QNKENNKETV (132 aa)).

The protein belongs to the alpha-IPM synthase/homocitrate synthase family. LeuA type 1 subfamily. Homodimer. Mn(2+) serves as cofactor.

The protein resides in the cytoplasm. The enzyme catalyses 3-methyl-2-oxobutanoate + acetyl-CoA + H2O = (2S)-2-isopropylmalate + CoA + H(+). The protein operates within amino-acid biosynthesis; L-leucine biosynthesis; L-leucine from 3-methyl-2-oxobutanoate: step 1/4. In terms of biological role, catalyzes the condensation of the acetyl group of acetyl-CoA with 3-methyl-2-oxobutanoate (2-ketoisovalerate) to form 3-carboxy-3-hydroxy-4-methylpentanoate (2-isopropylmalate). This is 2-isopropylmalate synthase from Salmonella typhi.